Here is a 227-residue protein sequence, read N- to C-terminus: Cytidylate kinase (227 aa).

G12–T20 contacts ATP.

The protein belongs to the cytidylate kinase family. Type 1 subfamily.

The protein localises to the cytoplasm. The catalysed reaction is CMP + ATP = CDP + ADP. The enzyme catalyses dCMP + ATP = dCDP + ADP. This Xanthomonas euvesicatoria pv. vesicatoria (strain 85-10) (Xanthomonas campestris pv. vesicatoria) protein is Cytidylate kinase.